The primary structure comprises 451 residues: Tubulin alpha-1 chain (451 aa).

Gln-11 is a GTP binding site. At Lys-40 the chain carries N6-acetyllysine. GTP is bound by residues Glu-71, Gly-144, Thr-145, Thr-179, Asn-206, and Asn-228. Glu-71 lines the Mg(2+) pocket. Residue Glu-254 is part of the active site.

It belongs to the tubulin family. As to quaternary structure, dimer of alpha and beta chains. A typical microtubule is a hollow water-filled tube with an outer diameter of 25 nm and an inner diameter of 15 nM. Alpha-beta heterodimers associate head-to-tail to form protofilaments running lengthwise along the microtubule wall with the beta-tubulin subunit facing the microtubule plus end conferring a structural polarity. Microtubules usually have 13 protofilaments but different protofilament numbers can be found in some organisms and specialized cells. The cofactor is Mg(2+). In terms of processing, undergoes a tyrosination/detyrosination cycle, the cyclic removal and re-addition of a C-terminal tyrosine residue by the enzymes tubulin tyrosine carboxypeptidase (TTCP) and tubulin tyrosine ligase (TTL), respectively. Acetylation of alpha chains at Lys-40 stabilizes microtubules and affects affinity and processivity of microtubule motors. This modification has a role in multiple cellular functions, ranging from cell motility, cell cycle progression or cell differentiation to intracellular trafficking and signaling.

The protein localises to the cytoplasm. It is found in the cytoskeleton. The enzyme catalyses GTP + H2O = GDP + phosphate + H(+). Its function is as follows. Tubulin is the major constituent of microtubules, a cylinder consisting of laterally associated linear protofilaments composed of alpha- and beta-tubulin heterodimers. Microtubules grow by the addition of GTP-tubulin dimers to the microtubule end, where a stabilizing cap forms. Below the cap, tubulin dimers are in GDP-bound state, owing to GTPase activity of alpha-tubulin. This Eleusine indica (Goosegrass) protein is Tubulin alpha-1 chain (TUBA1).